Consider the following 400-residue polypeptide: Tyrosine--tRNA ligase (400 aa).

Residues Pro42–His51 carry the 'HIGH' region motif. Positions Lys226–Ser230 match the 'KMSKS' region motif. ATP is bound at residue Lys229. The S4 RNA-binding domain occupies Phe339–Val399.

The protein belongs to the class-I aminoacyl-tRNA synthetase family. TyrS type 2 subfamily. In terms of assembly, homodimer.

The protein localises to the cytoplasm. The catalysed reaction is tRNA(Tyr) + L-tyrosine + ATP = L-tyrosyl-tRNA(Tyr) + AMP + diphosphate + H(+). Its function is as follows. Catalyzes the attachment of tyrosine to tRNA(Tyr) in a two-step reaction: tyrosine is first activated by ATP to form Tyr-AMP and then transferred to the acceptor end of tRNA(Tyr). The polypeptide is Tyrosine--tRNA ligase (Hahella chejuensis (strain KCTC 2396)).